We begin with the raw amino-acid sequence, 104 residues long: Transcription factor ILI1 (104 aa).

The segment covering 1 to 11 (MSSSRRSRSRR) has biased composition (basic residues). The interval 1–27 (MSSSRRSRSRRAGSSVPSSSSSSRTSI) is disordered. Residues 12 to 27 (AGSSVPSSSSSSRTSI) show a composition bias toward low complexity. In terms of domain architecture, bHLH spans 16–71 (VPSSSSSSRTSISEDQIAELLSKLQALLPESQARNGAHRGSAARVLQETCSYIRSL).

It belongs to the bHLH protein family. In terms of assembly, interacts with IBH1.

Atypical and probable non DNA-binding bHLH transcription factor that acts as a positive regulator of cell elongation and plant development. Binds the transcription repressor IBH1 and forms a heterodimer of antagonistic bHLH transcription factors that function downstream of BZR1 to mediate brassinosteroid regulation of cell elongation and lamina inclination. This chain is Transcription factor ILI1 (ILI1), found in Oryza sativa subsp. indica (Rice).